Reading from the N-terminus, the 141-residue chain is Hemoglobin subunit alpha-D (141 aa).

The region spanning 1-141 is the Globin domain; it reads MLTAEDKKLI…VAAVLAEKYR (141 aa). Positions 58 and 87 each coordinate heme b.

This sequence belongs to the globin family. Heterotetramer of two alpha-D chains and two beta chains. As to expression, red blood cells.

In terms of biological role, involved in oxygen transport from the lung to the various peripheral tissues. The sequence is that of Hemoglobin subunit alpha-D (HBAD) from Accipiter gentilis (Northern goshawk).